The primary structure comprises 186 residues: Coiled-coil domain-containing protein ORF13 (186 aa).

Coiled coils occupy residues 2 to 30 and 63 to 85; these read GIKE…DFIK and LREK…QRDK.

The sequence is that of Coiled-coil domain-containing protein ORF13 from Helicobacter pylori (strain 35A).